Consider the following 179-residue polypeptide: Oryzines biosynthesis cluster protein J (179 aa).

Residues 88–148 form the Cupin type-2 domain; sequence YVDYHPGCEP…NHCWRNPSKT (61 aa).

Belongs to the oryJ family.

The protein operates within secondary metabolite biosynthesis. Functionally, part of the gene cluster that mediates the biosynthesis of oryzines, natural products with an unusual maleidride backbone. The two subunits of the fungal fatty acid synthase oryfasA and oryfasB probably form octenoic acid. This fatty acid is most likely activated by the acyl-CoA ligase oryP to give octenyl-CoA before the citrate synthase-like protein oryE catalyzes condensation with oxaloacetate to form tricarboxylic acid. The next steps of the pathways are conjectural, but a favorite possible route has been proposed, beginning with decarboxylation and concomitant dehydration by the decarboxylase oryM, followed by tautomerization, which may lead to the production of a diene intermediate. Reduction of this diene intermediate could give the known metabolite piliformic acid. On the pathway to oryzine B and oryzine A, however, hydroxylation of the diene by the alpha-ketoglutarate-dependent dioxygenase oryG and lactonisation by the lactonohydrolases oryH or oryL could give oryzine B directly. Finally, enoyl reduction by the dehydrogenase oryD would then convert oryzine B into oryzine A. In Aspergillus oryzae (strain ATCC 42149 / RIB 40) (Yellow koji mold), this protein is Oryzines biosynthesis cluster protein J.